The chain runs to 472 residues: Type I restriction enzyme BthVORF4518P methylase subunit (472 aa).

S-adenosyl-L-methionine is bound by residues 151–156, 181–183, D214, and 243–244; these read QYFTPR, TGG, and DS.

Belongs to the N(4)/N(6)-methyltransferase family. In terms of assembly, the type I restriction/modification system is composed of three polypeptides R, M and S; the restriction enzyme has stoichiometry R(2)M(2)S(1) while the methyltransferase is M(2)S(1).

It catalyses the reaction a 2'-deoxyadenosine in DNA + S-adenosyl-L-methionine = an N(6)-methyl-2'-deoxyadenosine in DNA + S-adenosyl-L-homocysteine + H(+). The subtype gamma methyltransferase (M) subunit of a type I restriction enzyme. The M and S subunits together form a methyltransferase (MTase) that methylates two adenine residues of an undetermined sequence. In the presence of the R subunit the complex can also act as an endonuclease, binding to the same target sequence but cutting the DNA some distance from this site. Whether the DNA is cut or modified depends on the methylation state of the target sequence. When the target site is unmodified, the DNA is cut. When the target site is hemimethylated, the complex acts as a maintenance MTase modifying the DNA so that both strands become methylated. After locating a non-methylated recognition site, the enzyme complex serves as a molecular motor that translocates DNA in an ATP-dependent manner until a collision occurs that triggers cleavage. The polypeptide is Type I restriction enzyme BthVORF4518P methylase subunit (Bacteroides thetaiotaomicron (strain ATCC 29148 / DSM 2079 / JCM 5827 / CCUG 10774 / NCTC 10582 / VPI-5482 / E50)).